Consider the following 118-residue polypeptide: Large ribosomal subunit protein uL18 (118 aa).

It belongs to the universal ribosomal protein uL18 family. Part of the 50S ribosomal subunit; part of the 5S rRNA/L5/L18/L25 subcomplex. Contacts the 5S and 23S rRNAs.

This is one of the proteins that bind and probably mediate the attachment of the 5S RNA into the large ribosomal subunit, where it forms part of the central protuberance. The polypeptide is Large ribosomal subunit protein uL18 (Zymomonas mobilis subsp. mobilis (strain ATCC 31821 / ZM4 / CP4)).